We begin with the raw amino-acid sequence, 62 residues long: Small ribosomal subunit protein eS30z/eS30y/eS30x (62 aa).

The segment at 1–38 (MGKVHGSLARAGKVRGQTPKVAKQDKKKKPRGRAHKRL) is disordered. Basic residues predominate over residues 25–38 (DKKKKPRGRAHKRL).

The protein belongs to the eukaryotic ribosomal protein eS30 family.

This Arabidopsis thaliana (Mouse-ear cress) protein is Small ribosomal subunit protein eS30z/eS30y/eS30x (RPS30A).